We begin with the raw amino-acid sequence, 509 residues long: Protein disulfide-isomerase (509 aa).

A signal peptide spans 1 to 19; that stretch reads MLSRALLCLALAWAARVGA. The Thioredoxin 1 domain maps to 20-136; it reads DALEEEDNVL…IVNWLKKRTG (117 aa). Catalysis depends on nucleophile residues C55 and C58. The cysteines at positions 55 and 58 are disulfide-linked. K202 bears the N6-acetyllysine mark. Residues K224 and K273 each carry the N6-succinyllysine modification. S333 and S359 each carry phosphoserine. The region spanning 335–477 is the Thioredoxin 2 domain; it reads ELTAEKITQF…FKKFLESGGQ (143 aa). Residues C399 and C402 each act as nucleophile in the active site. A disulfide bond links C399 and C402. Phosphoserine is present on S429. The Prevents secretion from ER motif lies at 506–509; it reads KDEL.

The protein belongs to the protein disulfide isomerase family. In terms of assembly, heterodimer; heterodimerizes with the protein microsomal triglyceride transfer MTTP. Homodimer. Monomers and homotetramers may also occur. Interacts with P4HA2, forming a heterotetramer consisting of 2 alpha subunits (P4HA2) and 2 beta (P4HB), where P4HB plays the role of a structural subunit; this tetramer catalyzes the formation of 4-hydroxyproline in collagen. Also constitutes the structural subunit of the microsomal triacylglycerol transfer protein MTTP in mammalian cells. Stabilizes both enzymes and retain them in the ER without contributing to the catalytic activity. Binds UBQLN1. Interacts with ERO1B. Interacts with ILDR2. Interacts with ERN1/IRE1A (via N-terminus); the interaction is enhanced by phosphorylation of P4HB by FAM20C in response to endoplasmic reticulum stress and results in attenuation of ERN1 activity. Phosphorylation of Ser-359 by FAM20C is induced by endoplasmic reticulum stress and results in a functional switch from oxidoreductase to molecular chaperone. It also promotes interaction with ERN1.

The protein resides in the endoplasmic reticulum. Its subcellular location is the endoplasmic reticulum lumen. It localises to the melanosome. It is found in the cell membrane. It carries out the reaction Catalyzes the rearrangement of -S-S- bonds in proteins.. Functionally, this multifunctional protein catalyzes the formation, breakage and rearrangement of disulfide bonds. At the cell surface, seems to act as a reductase that cleaves disulfide bonds of proteins attached to the cell. May therefore cause structural modifications of exofacial proteins. Inside the cell, seems to form/rearrange disulfide bonds of nascent proteins. At high concentrations and following phosphorylation by FAM20C, functions as a chaperone that inhibits aggregation of misfolded proteins. At low concentrations, facilitates aggregation (anti-chaperone activity). May be involved with other chaperones in the structural modification of the TG precursor in hormone biogenesis. Also acts as a structural subunit of various enzymes such as prolyl 4-hydroxylase and microsomal triacylglycerol transfer protein MTTP. Receptor for LGALS9; the interaction retains P4HB at the cell surface of Th2 T helper cells, increasing disulfide reductase activity at the plasma membrane, altering the plasma membrane redox state and enhancing cell migration. This Rattus norvegicus (Rat) protein is Protein disulfide-isomerase (P4hb).